We begin with the raw amino-acid sequence, 709 residues long: G1/S-specific cyclin-E (709 aa).

Disordered stretches follow at residues 1–30 (MGLN…NGEV), 43–149 (ISSS…NLSS), 162–205 (VDGQ…GSKQ), 221–289 (TVVT…PKHQ), and 642–709 (ALRA…RSNP). Polar residues-rich tracts occupy residues 7-29 (SVCS…SNGE), 61-70 (PSTSFSSASQ), and 91-106 (CDSQ…TSNG). Phosphoserine is present on residues S114, S115, S117, and S129. Positions 162–175 (VDGQSTQELLSIRS) are enriched in polar residues. Phosphoserine is present on residues S187, S192, S195, and S198. Residues 187 to 199 (SPLPDSPDSPPSP) are compositionally biased toward pro residues. A compositionally biased stretch (acidic residues) spans 228 to 258 (EDDDLLDDSCEDYSYDEDDEDDVEEEDDDVE). A compositionally biased stretch (polar residues) spans 260–277 (YSSTISPASSGCSQQQAV). T651 carries the phosphothreonine modification. The span at 677 to 709 (SSTTTCCNTAASNKGGKSSSNNSVTSCSSRSNP) shows a compositional bias: low complexity.

It belongs to the cyclin family. Cyclin E subfamily. As to quaternary structure, interacts with a member of the CDK2/CDK protein kinases to form a serine/threonine kinase holoenzyme complex. The cyclin subunit imparts substrate specificity to the complex. Interacts (via C-terminus) with Z600 (via C-terminus). In terms of tissue distribution, isoform II is ubiquitous in early embryos and, prior to mitosis 14, is rapidly degraded in all cells except the pole (germ) cells. Expressed during G1 phase in proliferating peripheral nervous system cells. Constitutive expression in embryonic cycles lacking a G1 phase.

The protein resides in the nucleus. In terms of biological role, essential for the control of the cell cycle at the G1/S (start) transition. Targeted by archipelago for degradation by the SFC ubiquitin ligase complex. The protein is G1/S-specific cyclin-E (CycE) of Drosophila melanogaster (Fruit fly).